A 362-amino-acid chain; its full sequence is MLRLVVGALLLVLAFAGGYAVAACKTVTLTVDGTAMRVTTMKSRVIDIVEENGFSVDDRDDLYPAAGVQVHDADTIVLRRSRPLQISLDGHDAKQVWTTASTVDEALAQLAMTDTAPAAASRASRVPLSGMALPVVSAKTVQLNDGGLVRTVHLPAPNVAGLLSAAGVPLLQSDHVVPAATAPIVEGMQIQVTRNRIKKVTERLPLPPNARRVEDPEMNMSREVVEDPGVPGTQDVTFAVAEVNGVETGRLPVANVVVTPAHEAVVRVGTKPGTEVPPVIDGSIWDAIAGCEAGGNWAINTGNGYYGGVQFDQGTWEANGGLRYAPRADLATREEQIAVAEVTRLRQGWGAWPVCAARAGAR.

The signal sequence occupies residues 1–23 (MLRLVVGALLLVLAFAGGYAVAA). A lipid anchor (N-palmitoyl cysteine) is attached at Cys-24. A lipid anchor (S-diacylglycerol cysteine) is attached at Cys-24. The region spanning 192-272 (VTRNRIKKVT…EAVVRVGTKP (81 aa)) is the G5 domain. Cys-291 and Cys-355 form a disulfide bridge.

Belongs to the transglycosylase family. Rpf subfamily.

It localises to the cell membrane. Its function is as follows. Factor that stimulates resuscitation of dormant cells. Has peptidoglycan (PG) hydrolytic activity. Active in the pM concentration range. Has little to no effect on actively-growing cells. PG fragments could either directly activate the resuscitation pathway of dormant bacteria or serve as a substrate for endogenous Rpf, resulting in low molecular weight products with resuscitation activity. Plays a role in reactivating bacteria from chronic tuberculosis (TB) in mice. This is Resuscitation-promoting factor RpfB (rpfB) from Mycobacterium tuberculosis (strain ATCC 35801 / TMC 107 / Erdman).